A 424-amino-acid chain; its full sequence is 3-phosphoshikimate 1-carboxyvinyltransferase (424 aa).

The 3-phosphoshikimate site is built by Lys21, Ser22, and Arg26. Lys21 serves as a coordination point for phosphoenolpyruvate. The phosphoenolpyruvate site is built by Gly92 and Arg120. Ser163, Ser164, Gln165, Ser191, Asp306, and Lys333 together coordinate 3-phosphoshikimate. Residue Gln165 participates in phosphoenolpyruvate binding. Catalysis depends on Asp306, which acts as the Proton acceptor. Phosphoenolpyruvate-binding residues include Arg337, Arg379, and Lys405.

This sequence belongs to the EPSP synthase family. Monomer.

It localises to the cytoplasm. It carries out the reaction 3-phosphoshikimate + phosphoenolpyruvate = 5-O-(1-carboxyvinyl)-3-phosphoshikimate + phosphate. It functions in the pathway metabolic intermediate biosynthesis; chorismate biosynthesis; chorismate from D-erythrose 4-phosphate and phosphoenolpyruvate: step 6/7. Its function is as follows. Catalyzes the transfer of the enolpyruvyl moiety of phosphoenolpyruvate (PEP) to the 5-hydroxyl of shikimate-3-phosphate (S3P) to produce enolpyruvyl shikimate-3-phosphate and inorganic phosphate. The chain is 3-phosphoshikimate 1-carboxyvinyltransferase from Clostridium perfringens (strain 13 / Type A).